We begin with the raw amino-acid sequence, 171 residues long: Macro domain-containing protein RSc0334 (171 aa).

In terms of domain architecture, Macro spans 1 to 171; that stretch reads MPIPTVTLRA…LYETALNEAR (171 aa).

It belongs to the MacroD-type family.

The sequence is that of Macro domain-containing protein RSc0334 from Ralstonia nicotianae (strain ATCC BAA-1114 / GMI1000) (Ralstonia solanacearum).